The chain runs to 431 residues: MDIISQCPDHLLLRILSFIPTKDVIVTSLLSKRWGSLWRWVPKLEYDFTRQNMRFVKFVYRSLLQNNAPVLESLHLKNIILYAECRTVDIGGWIDIAVSRRVRELEISINCSDEKFRLPSSLYTCGTLESFILTIKHCHLVDVPLAVCLPSLKKLHLRCIGWAYNATLLRLISGCTNLEELRLARPDDDGDYIMIHEAGSTIDYMSIFERRYMFEFMFDQMFGKGSSNGINAPLKYFSISNNYRIHNFRGIEKMPDWVEARIAVTGGSHKYLKEITYAKGLYVCLSVSEVMNPYDMIFHMLVDLTICTCTQGWWDLLTHMLQGSPKLRFLTLTNDHCRELPSLETPACWKRPSSVPACLLSSLQAFTWSGYKGRQGDKEVVKYVLRNATGLKKRIFISKSNDFGEKFCMLQELASVPTPSPSCQLLFDRIF.

Positions 1-47 (MDIISQCPDHLLLRILSFIPTKDVIVTSLLSKRWGSLWRWVPKLEYD) constitute an F-box domain. LRR repeat units lie at residues 52-78 (NMRF…HLKN), 85-109 (CRTV…EISI), 132-159 (ILTI…HLRC), 160-185 (IGWA…RLAR), and 309-334 (CTQG…TLTN). The FBD domain occupies 348-398 (CWKRPSSVPACLLSSLQAFTWSGYKGRQGDKEVVKYVLRNATGLKKRIFIS).

This is Putative F-box/FBD/LRR-repeat protein At4g26350 from Arabidopsis thaliana (Mouse-ear cress).